We begin with the raw amino-acid sequence, 376 residues long: MLNREQLISIRRDLHQIPELGFKEFKTQAYLINHLDAYSKDRIEMETWRTGLFVKVKGTNPERVFAYRADMDGLSIPEDTGYPFQSVHEGKMHACGHDLHMTIALGVIDHFVHEPIKEDLLFMFQPAEEGPGGAEPMLTSDVLKKWTPDFITALHIAPEYPVGTIATKPGLLFANTSELVIDLEGKGGHAAYPHLANDMVVAASALVGQLQSVISRNVDPLDSAVITIGTITGGTAQNIIAQHAKLDGTIRTLSPESMEKVRKRIEALAKGIEIGYECKATVRYPSSYYEVDNSKELTEEFMSYVAEEGLANVVECREAMTGEDFGYMLKKYPGFMFWLGVDSEYGLHHAKLMPDEKAIETAVNVMTAYFKKQAGE.

The active site involves Asp70. Residue Glu129 is the Proton acceptor of the active site.

Belongs to the peptidase M20A family. N-acetyldiaminopimelate deacetylase subfamily.

It carries out the reaction N-acetyl-(2S,6S)-2,6-diaminopimelate + H2O = (2S,6S)-2,6-diaminopimelate + acetate. It functions in the pathway amino-acid biosynthesis; L-lysine biosynthesis via DAP pathway; LL-2,6-diaminopimelate from (S)-tetrahydrodipicolinate (acetylase route): step 3/3. Catalyzes the conversion of N-acetyl-diaminopimelate to diaminopimelate and acetate. The polypeptide is N-acetyldiaminopimelate deacetylase (Bacillus pumilus (strain SAFR-032)).